Consider the following 70-residue polypeptide: ATP synthase subunit c (70 aa).

2 helical membrane-spanning segments follow: residues 4-24 (IAAGIAAGLAAVGAGVGNGLV) and 47-67 (FLGVGLIEALPILSIVIAFLV).

This sequence belongs to the ATPase C chain family. F-type ATPases have 2 components, F(1) - the catalytic core - and F(0) - the membrane proton channel. F(1) has five subunits: alpha(3), beta(3), gamma(1), delta(1), epsilon(1). F(0) has three main subunits: a(1), b(2) and c(10-14). The alpha and beta chains form an alternating ring which encloses part of the gamma chain. F(1) is attached to F(0) by a central stalk formed by the gamma and epsilon chains, while a peripheral stalk is formed by the delta and b chains.

It localises to the cell membrane. In terms of biological role, f(1)F(0) ATP synthase produces ATP from ADP in the presence of a proton or sodium gradient. F-type ATPases consist of two structural domains, F(1) containing the extramembraneous catalytic core and F(0) containing the membrane proton channel, linked together by a central stalk and a peripheral stalk. During catalysis, ATP synthesis in the catalytic domain of F(1) is coupled via a rotary mechanism of the central stalk subunits to proton translocation. Its function is as follows. Key component of the F(0) channel; it plays a direct role in translocation across the membrane. A homomeric c-ring of between 10-14 subunits forms the central stalk rotor element with the F(1) delta and epsilon subunits. This chain is ATP synthase subunit c, found in Limosilactobacillus fermentum (strain NBRC 3956 / LMG 18251) (Lactobacillus fermentum).